Here is a 262-residue protein sequence, read N- to C-terminus: Flap endonuclease Xni (262 aa).

Asp112 lines the Mg(2+) pocket. One can recognise a 5'-3' exonuclease domain in the interval 171–258 (QQLNDYWAIT…GFNLKDLRYT (88 aa)). K(+) is bound by residues Ile179, Val190, and Ile193. Residues 192-197 (GIGSKG) form an interaction with DNA region.

It belongs to the Xni family. Mg(2+) is required as a cofactor. Requires K(+) as cofactor.

Functionally, has flap endonuclease activity. During DNA replication, flap endonucleases cleave the 5'-overhanging flap structure that is generated by displacement synthesis when DNA polymerase encounters the 5'-end of a downstream Okazaki fragment. The sequence is that of Flap endonuclease Xni from Psychromonas ingrahamii (strain DSM 17664 / CCUG 51855 / 37).